The following is a 61-amino-acid chain: Small ribosomal subunit protein uS14 (61 aa).

The Zn(2+) site is built by Cys24, Cys27, Cys40, and Cys43.

Belongs to the universal ribosomal protein uS14 family. Zinc-binding uS14 subfamily. Part of the 30S ribosomal subunit. Contacts proteins S3 and S10. Requires Zn(2+) as cofactor.

Its function is as follows. Binds 16S rRNA, required for the assembly of 30S particles and may also be responsible for determining the conformation of the 16S rRNA at the A site. The protein is Small ribosomal subunit protein uS14 of Clostridioides difficile (strain 630) (Peptoclostridium difficile).